The chain runs to 412 residues: Probable inactive allantoicase (412 aa).

This sequence belongs to the allantoicase family.

Its function is as follows. The function of this enzyme is unclear as allantoicase activity is not known to exist in mammals. The polypeptide is Probable inactive allantoicase (ALLC) (Bos taurus (Bovine)).